The following is a 363-amino-acid chain: UDP-N-acetylglucosamine--N-acetylmuramyl-(pentapeptide) pyrophosphoryl-undecaprenol N-acetylglucosamine transferase (363 aa).

Residues 15–17, N127, R169, S197, I251, 270–275, and Q296 contribute to the UDP-N-acetyl-alpha-D-glucosamine site; these read TGG and ALTVSE.

This sequence belongs to the glycosyltransferase 28 family. MurG subfamily.

It is found in the cell inner membrane. The enzyme catalyses di-trans,octa-cis-undecaprenyl diphospho-N-acetyl-alpha-D-muramoyl-L-alanyl-D-glutamyl-meso-2,6-diaminopimeloyl-D-alanyl-D-alanine + UDP-N-acetyl-alpha-D-glucosamine = di-trans,octa-cis-undecaprenyl diphospho-[N-acetyl-alpha-D-glucosaminyl-(1-&gt;4)]-N-acetyl-alpha-D-muramoyl-L-alanyl-D-glutamyl-meso-2,6-diaminopimeloyl-D-alanyl-D-alanine + UDP + H(+). It participates in cell wall biogenesis; peptidoglycan biosynthesis. In terms of biological role, cell wall formation. Catalyzes the transfer of a GlcNAc subunit on undecaprenyl-pyrophosphoryl-MurNAc-pentapeptide (lipid intermediate I) to form undecaprenyl-pyrophosphoryl-MurNAc-(pentapeptide)GlcNAc (lipid intermediate II). This chain is UDP-N-acetylglucosamine--N-acetylmuramyl-(pentapeptide) pyrophosphoryl-undecaprenol N-acetylglucosamine transferase, found in Dichelobacter nodosus (strain VCS1703A).